A 971-amino-acid polypeptide reads, in one-letter code: Outer capsid protein VP2 (971 aa).

It belongs to the orbivirus VP2 family.

The protein resides in the virion. Functionally, the VP2 protein is one of the two proteins (with VP5) which constitute the virus particle outer capsid. It is the major target of the host immunogenic response. This chain is Outer capsid protein VP2 (Segment-2), found in Epizootic hemorrhagic disease virus 1 (EHDV-1).